An 818-amino-acid chain; its full sequence is Actin filament-associated protein 1-like 2 (818 aa).

Tyr-56 bears the Phosphotyrosine mark. Residues 66–163 (QNAESQGKAP…SKGKSAPYQW (98 aa)) form a disordered region. The span at 85–94 (EPSQHSSAPQ) shows a compositional bias: polar residues. Over residues 123–139 (YYEEAEPYDTSLNEDGE) the composition is skewed to acidic residues. 2 PH domains span residues 175-271 (DARI…EVSG) and 353-447 (SLET…SESG). Phosphoserine is present on Ser-408. Tyr-413 carries the phosphotyrosine modification. Ser-484 carries the post-translational modification Phosphoserine. The disordered stretch occupies residues 513-532 (AAVEPTEEATPVADDPNERE). Residues 652 to 749 (AEIKLGKNRT…VKDNLKKAEA (98 aa)) adopt a coiled-coil conformation. The disordered stretch occupies residues 765–787 (NVSPRPKAVTPASAPDCTPVNSA).

Interacts with SRC. Interacts with LCK when tyrosine phosphorylated. In terms of processing, tyrosine phosphorylated (by SRC). As to expression, detected in spleen and thyroid, and at lower levels in kidney, brain, lung and pancreas.

The protein resides in the cytoplasm. In terms of biological role, may play a role in a signaling cascade by enhancing the kinase activity of SRC. Contributes to SRC-regulated transcription activation. The chain is Actin filament-associated protein 1-like 2 (AFAP1L2) from Homo sapiens (Human).